We begin with the raw amino-acid sequence, 124 residues long: UPF0357 protein C1687.07 (124 aa).

Positions 1–24 are cleaved as a signal peptide; that stretch reads MASFHIIVSYVTVVLAIIIAITFA.

It belongs to the UPF0357 family.

This is UPF0357 protein C1687.07 from Schizosaccharomyces pombe (strain 972 / ATCC 24843) (Fission yeast).